Reading from the N-terminus, the 168-residue chain is Protein C2-DOMAIN ABA-RELATED 1 (168 aa).

Position 1 is an N-acetylmethionine (methionine 1). In terms of domain architecture, C2 spans 1–104; the sequence is MENLVGLLRI…EAIKFAHQLG (104 aa). The Ca(2+) site is built by arginine 21, aspartate 22, aspartate 27, aspartate 73, tyrosine 74, aspartate 75, and aspartate 81.

Belongs to the plant CAR protein family. In terms of assembly, dimers and oligomers. Binds to PYR/PYL/RCAR abscisic acid intracellular receptors in an ABA-independent manner, both at the plasma membrane and in the nucleus. Interacts directly with PYR1, PYL1, PYL4, PYL6 and PYL8. Binds phospholipids in a Ca(2+)-dependent manner. Ca(2+) is required as a cofactor. Expressed in roots.

Its subcellular location is the cell membrane. It is found in the nucleus. Functionally, stimulates the GTPase/ATPase activities of Obg-like ATPases. Mediates the transient calcium-dependent interaction of PYR/PYL/RCAR abscisic acid (ABA) receptors with the plasma membrane and thus regulates ABA sensitivity. Binds liposomes in the absence of exogenous Ca(2+), but this activity is enhanced in the presence of Ca(2+) and generates membrane curvature. In Arabidopsis thaliana (Mouse-ear cress), this protein is Protein C2-DOMAIN ABA-RELATED 1.